The sequence spans 312 residues: Protein Rep40 (312 aa).

Residues D84 to K239 enclose the SF3 helicase domain. ATP is bound at residue G110–T117. Residues K264–N301 are disordered.

In terms of assembly, homooligomer.

The protein localises to the host nucleus. It carries out the reaction ATP + H2O = ADP + phosphate + H(+). Functionally, plays a critical role during packaging of viral DNA into empty capsids, where they are thought to be part of the packaging motor complex. The single stranded genomic DNA is packaged in a 3' to 5' direction and requires the association of viral DNA with Rep40. The sequence is that of Protein Rep40 (Rep40) from Mammalia (AAV-2).